The following is a 243-amino-acid chain: Orotidine 5'-phosphate decarboxylase (243 aa).

Substrate-binding positions include Asp12, Lys34, 61 to 70 (DLKFHDIPNT), Thr125, Arg187, Gln196, Gly216, and Arg217. The active-site Proton donor is the Lys63.

Belongs to the OMP decarboxylase family. Type 1 subfamily. As to quaternary structure, homodimer.

It carries out the reaction orotidine 5'-phosphate + H(+) = UMP + CO2. It functions in the pathway pyrimidine metabolism; UMP biosynthesis via de novo pathway; UMP from orotate: step 2/2. Its function is as follows. Catalyzes the decarboxylation of orotidine 5'-monophosphate (OMP) to uridine 5'-monophosphate (UMP). This is Orotidine 5'-phosphate decarboxylase from Heliobacterium modesticaldum (strain ATCC 51547 / Ice1).